A 487-amino-acid chain; its full sequence is MTKVRTRFAPSPTGYMHVGNLRTALYTYLIAKHDGGDFILRIEDTDQERFVEGALDIIYHTLEITGLKHDEGPDIGGPVGPYIQSQRTDIYLEYAKELIDKGKAYYCFCTKERMDSLKNKDDEEKEFYKYDKHCLKLSKEEINEKLASNIPYVIRQNNPESGFTTFHDEIYGDISVDNSELDDMILIKSDGYPTYNFANVVDDHLMGITHVVRGSEYLSSAPKYNRLYDAFGWEVPIYIHCPPIMKDAHQKLSKRNGDASFQDLIEKGYLKEAVLNYIALLGWNPGNEKEIFDLDELVELFNYKNINKSPAIFDNVKLKWMNGEYMKKLPLEEFNKMALPYYKKVISKNLDFLKISELLKIRVEILSEIPDMLDFFNELPEYSTEIYIHKKMKTNLENSLFTLEKILPKFKELSPWTLENIEKCCMDLISELQVKNGIVLWPVRIALSGKKSTPGGAFEIADIIGKDESLKRIEYGIKKLKLESGDN.

A 'HIGH' region motif is present at residues 10 to 20 (PSPTGYMHVGN). The 'KMSKS' region motif lies at 251-255 (KLSKR). Lys-254 contributes to the ATP binding site.

It belongs to the class-I aminoacyl-tRNA synthetase family. Glutamate--tRNA ligase type 1 subfamily. In terms of assembly, monomer.

The protein localises to the cytoplasm. The enzyme catalyses tRNA(Glu) + L-glutamate + ATP = L-glutamyl-tRNA(Glu) + AMP + diphosphate. Its function is as follows. Catalyzes the attachment of glutamate to tRNA(Glu) in a two-step reaction: glutamate is first activated by ATP to form Glu-AMP and then transferred to the acceptor end of tRNA(Glu). The polypeptide is Glutamate--tRNA ligase (Clostridium kluyveri (strain ATCC 8527 / DSM 555 / NBRC 12016 / NCIMB 10680 / K1)).